A 471-amino-acid chain; its full sequence is MAPQLLLCLILTFLWSLPEAESNVFLKSNVANRFLQRTKRANSIFEEIRPGNIERECVEEKCSKEEAREVFQDNEKTEAFWTVYVDGDQCLSNPCHYRGTCKDGIGSYTCTCLPGYEGKNCEHVVVKSCRLFNGNCWHFCKTVQNDTQCSCAEGYRLGVDGFSCIAEGDFSCGRIIKSRNKREASLPDFHFSDDYDAIDENNLVETVQSQSATLLKKSDNPSPDIRIVSGLDCKLGECPWQAVLIDEHGKAFGGGTILSPYFVLTAAHCLNQTKSIAVVVGQVDISRKETRHLLHVDKAYMHSKYVRATYDHDIAILRLRTPIQFSENVVPACLPTADFADEVLMKQDFGIVSGFGRLHERGSTSDILKVIRVPYVDRYTCMLSSNYRITPSMFCAGYGNQPQDACQGDSGGPHITAYGDTHFITGIISWGEGCGRKGKYGIYTKVSNFIPWIKTIMRRNQPSTESSTGRL.

An N-terminal signal peptide occupies residues 1–20 (MAPQLLLCLILTFLWSLPEA). Residues 21–40 (ESNVFLKSNVANRFLQRTKR) constitute a propeptide that is removed on maturation. The 46-residue stretch at 41–86 (ANSIFEEIRPGNIERECVEEKCSKEEAREVFQDNEKTEAFWTVYVD) folds into the Gla domain. 10 positions are modified to 4-carboxyglutamate: Glu46, Glu47, Glu54, Glu56, Glu59, Glu60, Glu65, Glu66, Glu69, and Glu75. A disulfide bridge links Cys57 with Cys62. One can recognise an EGF-like 1; calcium-binding domain in the interval 86–122 (DGDQCLSNPCHYRGTCKDGIGSYTCTCLPGYEGKNCE). 10 disulfides stabilise this stretch: Cys90–Cys101, Cys95–Cys110, Cys112–Cys121, Cys129–Cys140, Cys136–Cys149, Cys151–Cys164, Cys172–Cys333, Cys233–Cys238, Cys381–Cys395, and Cys406–Cys434. The O-linked (Hex...) serine glycan is linked to Ser92. Residues 129–164 (CRLFNGNCWHFCKTVQNDTQCSCAEGYRLGVDGFSC) enclose the EGF-like 2 domain. A propeptide spans 182–226 (REASLPDFHFSDDYDAIDENNLVETVQSQSATLLKKSDNPSPDIR) (activation peptide). The 232-residue stretch at 227–458 (IVSGLDCKLG…FIPWIKTIMR (232 aa)) folds into the Peptidase S1 domain. The Charge relay system role is filled by His268. Asn271 is a glycosylation site (N-linked (GlcNAc...) asparagine). The active-site Charge relay system is the Asp313. Ser410 functions as the Charge relay system in the catalytic mechanism.

Belongs to the peptidase S1 family. Snake venom subfamily. In terms of assembly, heterodimer of a light chain and a heavy chain; disulfide-linked. In terms of processing, the vitamin K-dependent, enzymatic carboxylation of some glutamate residues allows the modified protein to bind calcium. Expressed by the venom gland.

Its subcellular location is the secreted. The catalysed reaction is Selective cleavage of Arg-|-Thr and then Arg-|-Ile bonds in prothrombin to form thrombin.. Functionally, snake prothrombin activator that attacks the hemostatic system of prey. This protein is functionally similar to blood coagulation factor Xa. The sequence is that of Venom prothrombin activator vestarin-D2 from Demansia vestigiata (Lesser black whip snake).